The primary structure comprises 298 residues: L-xylulose reductase (298 aa).

Ile19, Asp68, and Asn103 together coordinate NADP(+). Active-site proton donor residues include Ser161, Ser162, and Tyr175. Residues Tyr175, Lys179, and Val207 each coordinate NADP(+). Residue Lys179 is the Lowers pKa of active site Tyr of the active site.

This sequence belongs to the short-chain dehydrogenases/reductases (SDR) family.

The catalysed reaction is xylitol + NADP(+) = L-xylulose + NADPH + H(+). The protein operates within carbohydrate degradation; L-arabinose degradation via L-arabinitol; D-xylulose 5-phosphate from L-arabinose (fungal route): step 3/5. L-xylulose reductase involved in the catabolism of L-arabinose through an oxidoreductive pathway. Catalyzes the NADPH-dependent reduction of L-xylulose. The polypeptide is L-xylulose reductase (Aspergillus niger (strain ATCC 1015 / CBS 113.46 / FGSC A1144 / LSHB Ac4 / NCTC 3858a / NRRL 328 / USDA 3528.7)).